The primary structure comprises 482 residues: UDP-N-acetylmuramoyl-L-alanyl-D-glutamate--2,6-diaminopimelate ligase (482 aa).

Residues L28 and S30 each coordinate UDP-N-acetyl-alpha-D-muramoyl-L-alanyl-D-glutamate. 108 to 114 provides a ligand contact to ATP; the sequence is GTNGKTT. Residues 150–151, S177, Q183, and R185 contribute to the UDP-N-acetyl-alpha-D-muramoyl-L-alanyl-D-glutamate site; that span reads TT. Position 217 is an N6-carboxylysine (K217). Meso-2,6-diaminopimelate is bound by residues R372, 396–399, G447, and E451; that span reads DNPR. A Meso-diaminopimelate recognition motif motif is present at residues 396 to 399; the sequence is DNPR.

The protein belongs to the MurCDEF family. MurE subfamily. It depends on Mg(2+) as a cofactor. In terms of processing, carboxylation is probably crucial for Mg(2+) binding and, consequently, for the gamma-phosphate positioning of ATP.

Its subcellular location is the cytoplasm. It carries out the reaction UDP-N-acetyl-alpha-D-muramoyl-L-alanyl-D-glutamate + meso-2,6-diaminopimelate + ATP = UDP-N-acetyl-alpha-D-muramoyl-L-alanyl-gamma-D-glutamyl-meso-2,6-diaminopimelate + ADP + phosphate + H(+). The protein operates within cell wall biogenesis; peptidoglycan biosynthesis. Its function is as follows. Catalyzes the addition of meso-diaminopimelic acid to the nucleotide precursor UDP-N-acetylmuramoyl-L-alanyl-D-glutamate (UMAG) in the biosynthesis of bacterial cell-wall peptidoglycan. The chain is UDP-N-acetylmuramoyl-L-alanyl-D-glutamate--2,6-diaminopimelate ligase from Aquifex aeolicus (strain VF5).